The chain runs to 291 residues: uncharacterized protein (291 aa).

The next 2 membrane-spanning stretches (helical) occupy residues 42–62 (IFFF…RALW) and 86–106 (TIFP…LALD).

This sequence belongs to the cytochrome c oxidase subunit 2 family.

The protein localises to the mitochondrion membrane. This is an uncharacterized protein from Arabidopsis thaliana (Mouse-ear cress).